The chain runs to 148 residues: Large-conductance mechanosensitive channel (148 aa).

The next 2 membrane-spanning stretches (helical) occupy residues 16–36 and 89–109; these read VMDL…VNSI and GSFI…FLMV.

It belongs to the MscL family. Homopentamer.

It localises to the cell inner membrane. Its function is as follows. Channel that opens in response to stretch forces in the membrane lipid bilayer. May participate in the regulation of osmotic pressure changes within the cell. The chain is Large-conductance mechanosensitive channel from Paraburkholderia phytofirmans (strain DSM 17436 / LMG 22146 / PsJN) (Burkholderia phytofirmans).